The primary structure comprises 917 residues: Alanine--tRNA ligase (917 aa).

Positions 615, 619, 719, and 723 each coordinate Zn(2+).

This sequence belongs to the class-II aminoacyl-tRNA synthetase family. Zn(2+) serves as cofactor.

Its subcellular location is the cytoplasm. The catalysed reaction is tRNA(Ala) + L-alanine + ATP = L-alanyl-tRNA(Ala) + AMP + diphosphate. Functionally, catalyzes the attachment of alanine to tRNA(Ala) in a two-step reaction: alanine is first activated by ATP to form Ala-AMP and then transferred to the acceptor end of tRNA(Ala). Also edits incorrectly charged Ser-tRNA(Ala) and Gly-tRNA(Ala) via its editing domain. The sequence is that of Alanine--tRNA ligase from Thermococcus kodakarensis (strain ATCC BAA-918 / JCM 12380 / KOD1) (Pyrococcus kodakaraensis (strain KOD1)).